Consider the following 380-residue polypeptide: O-methyltransferase ucdC (380 aa).

S-adenosyl-L-methionine contacts are provided by residues 222–223 (GG), Asp-247, and Arg-283. His-287 (proton acceptor) is an active-site residue.

It belongs to the class I-like SAM-binding methyltransferase superfamily. Cation-independent O-methyltransferase family. COMT subfamily.

It participates in secondary metabolite biosynthesis. Functionally, nonribosomal peptide synthetase that mediates the biosynthesis of usterphenyllins and uscandidusins, p-terphenyl derivatives. Within the pathway, ucdC catalyzes O-methylation of the terphenyl triol intermediate produced by ucdB to yield terphenyllin carrying two methoxy moieties at C-9 and C-12. The pathway begin with the biosynthesis of 4-hydroxyphenylpyruvate (HPPA) from L-tyrosine, possibly by the aminotransferase ucdG. The nonribosomal peptide synthetase ucdA then condenses two HPPA units to produce atromentin. The key step in this pathway is the reduction and dehydration of atromentin to form a terphenyl triol intermediate, performed by the NAD-dependent dehydrogenase ucdB. Further O-methylation by the methyltransferase ucdC forms terphenyllin carrying two methoxy moieties at C-9 and C-12, and subsequent dihydroxylation at C-3 of ring A and C-15 of ring C by the flavin-dependent oxygenase ucdD leads to 3,15-dihydroxyterphenyllin. Prenylation by ucdE at position C-5 of ring A forms usterphenyllin B, and is followed by a second prenylation at position C-14 of ring C to form usterphenyllin A. The following furan ring formation that leads to uscandidusins A and B was proven to be an unexpected spontaneous non-enzymatic reaction. This chain is O-methyltransferase ucdC, found in Aspergillus ustus.